Reading from the N-terminus, the 288-residue chain is Polyprenyl transferase eriF (288 aa).

6 helical membrane-spanning segments follow: residues 24–44, 51–71, 101–121, 145–165, 215–235, and 268–288; these read ASII…TLPL, YIFL…LNQV, IAAF…LPET, CIAM…AISP, FIIT…GGIF, and FYTY…HGLI.

This sequence belongs to the UbiA prenyltransferase family. Mg(2+) is required as a cofactor.

The protein localises to the membrane. Polyprenyl transferase; part of the gene cluster that mediates the biosynthesis of erinacines, cyathane-xylosides that show unique biological activities, including leishmanicidal activity, stimulating activity for nerve growth-factor synthesis, and agonistic activity toward the kappa opioid receptor. The role of eriF within the pathway has still to be determined. The first step of the erinacines biosynthesis pathway is catalyzed by the geranylgeranyl diphosphate (GGPP) synthase eriE via conversion of farnesyl pyrophosphate and isopentyl pyrophosphate into geranylgeranyl pyrophosphate (GGPP). GGPP is then substrate of the diterpene cyclase eriG for the production of cyatha-3,12-diene. The cytochrome P450 monooxygenase eriI then hydroxylates cyatha-3,12-diene at C-14 of the seven-membered ring to produce erinacol, which is further hydroxylated at C-15 by the cytochrome P450 monooxygenase eriC to yield cyathadiol. The cytochrome P450 monooxygenase eriA then catalyzes C-11 hydroxylation in the presence of the short chain dehydrogenase/reductase (SDR) eriH, which leads to the production of cyathatriol. The acetyltransferase eriL converts cyathatriol into 11-O-acetyl-cyathatriol. The SDR eriH catalyzes further oxidation of 11-O-acetyl-cyathatriol into 1-O-acetylcyathin A3. Finally, the glycosyl transferase eriJ tranfers xylose from UDP-xylose onto C-14 of 11-O-acetyl-cyathatriol to form eracine Q. EriJ is also able to convert 11-O-acetyl-cyathatriol to eracine Q2 by using UDP-D-glucose as cosubstrate, but at a lower rate. This Hericium erinaceus (Lion's mane mushroom) protein is Polyprenyl transferase eriF.